The sequence spans 164 residues: Peptide methionine sulfoxide reductase MsrA (164 aa).

Cysteine 16 is a catalytic residue.

The protein belongs to the MsrA Met sulfoxide reductase family.

The enzyme catalyses L-methionyl-[protein] + [thioredoxin]-disulfide + H2O = L-methionyl-(S)-S-oxide-[protein] + [thioredoxin]-dithiol. It carries out the reaction [thioredoxin]-disulfide + L-methionine + H2O = L-methionine (S)-S-oxide + [thioredoxin]-dithiol. Functionally, has an important function as a repair enzyme for proteins that have been inactivated by oxidation. Catalyzes the reversible oxidation-reduction of methionine sulfoxide in proteins to methionine. This chain is Peptide methionine sulfoxide reductase MsrA, found in Clostridium tetani (strain Massachusetts / E88).